The sequence spans 393 residues: SEC12-like protein 2 (393 aa).

The residue at position 2 (Ala2) is an N-acetylalanine. The Cytoplasmic segment spans residues 2 to 367 (ANQSTETNQP…EQKGDKPGVR (366 aa)). The disordered stretch occupies residues 41–67 (EKSEDDDESSSSSSSSRSCIVLSGGGG). Ser43 is subject to Phosphoserine. 4 WD repeats span residues 151–190 (RDVGQQLALAFNPEGSVLAAGAEDGTLRVFKWPSMNTLLN), 193–231 (QAHSSVKCLTFSESGQFLVSLGGPVCRVWDVNASAAVAS), 283–322 (IKKNSISAFNVSADGKLLAIGTLEGDVLILESTRMQTIQV), and 326–367 (AHLG…PGVR). The chain crosses the membrane as a helical; Signal-anchor for type II membrane protein span at residues 368 to 388 (WWLLVLLIVLLYVVAYYYMKA). The Lumenal portion of the chain corresponds to 389-393 (KGIIP).

As to quaternary structure, interacts with BZIP28.

Its subcellular location is the endoplasmic reticulum membrane. The protein localises to the golgi apparatus. It localises to the cis-Golgi network membrane. Functionally, required for the formation or budding of transport vesicles from the ER. The sequence is that of SEC12-like protein 2 (STL2P) from Arabidopsis thaliana (Mouse-ear cress).